The sequence spans 284 residues: Acetyl-coenzyme A carboxylase carboxyl transferase subunit beta (284 aa).

Residues F31–K284 enclose the CoA carboxyltransferase N-terminal domain. Zn(2+) is bound by residues C35, C38, C54, and C57. A C4-type zinc finger spans residues C35–C57.

Belongs to the AccD/PCCB family. Acetyl-CoA carboxylase is a heterohexamer composed of biotin carboxyl carrier protein (AccB), biotin carboxylase (AccC) and two subunits each of ACCase subunit alpha (AccA) and ACCase subunit beta (AccD). Zn(2+) is required as a cofactor.

It is found in the cytoplasm. It carries out the reaction N(6)-carboxybiotinyl-L-lysyl-[protein] + acetyl-CoA = N(6)-biotinyl-L-lysyl-[protein] + malonyl-CoA. Its pathway is lipid metabolism; malonyl-CoA biosynthesis; malonyl-CoA from acetyl-CoA: step 1/1. Functionally, component of the acetyl coenzyme A carboxylase (ACC) complex. Biotin carboxylase (BC) catalyzes the carboxylation of biotin on its carrier protein (BCCP) and then the CO(2) group is transferred by the transcarboxylase to acetyl-CoA to form malonyl-CoA. The chain is Acetyl-coenzyme A carboxylase carboxyl transferase subunit beta from Clostridioides difficile (strain 630) (Peptoclostridium difficile).